Consider the following 93-residue polypeptide: Aspartyl/glutamyl-tRNA(Asn/Gln) amidotransferase subunit C (93 aa).

This sequence belongs to the GatC family. In terms of assembly, heterotrimer of A, B and C subunits.

The enzyme catalyses L-glutamyl-tRNA(Gln) + L-glutamine + ATP + H2O = L-glutaminyl-tRNA(Gln) + L-glutamate + ADP + phosphate + H(+). The catalysed reaction is L-aspartyl-tRNA(Asn) + L-glutamine + ATP + H2O = L-asparaginyl-tRNA(Asn) + L-glutamate + ADP + phosphate + 2 H(+). Its function is as follows. Allows the formation of correctly charged Asn-tRNA(Asn) or Gln-tRNA(Gln) through the transamidation of misacylated Asp-tRNA(Asn) or Glu-tRNA(Gln) in organisms which lack either or both of asparaginyl-tRNA or glutaminyl-tRNA synthetases. The reaction takes place in the presence of glutamine and ATP through an activated phospho-Asp-tRNA(Asn) or phospho-Glu-tRNA(Gln). This Rubrobacter xylanophilus (strain DSM 9941 / JCM 11954 / NBRC 16129 / PRD-1) protein is Aspartyl/glutamyl-tRNA(Asn/Gln) amidotransferase subunit C.